Reading from the N-terminus, the 78-residue chain is Large ribosomal subunit protein bL28 (78 aa).

This sequence belongs to the bacterial ribosomal protein bL28 family.

In Microcystis aeruginosa (strain NIES-843 / IAM M-2473), this protein is Large ribosomal subunit protein bL28.